A 372-amino-acid polypeptide reads, in one-letter code: Flagellar P-ring protein (372 aa).

The N-terminal stretch at 1–26 (MNLSSLSFRLLATLLGACVVVAPASA) is a signal peptide.

It belongs to the FlgI family. The basal body constitutes a major portion of the flagellar organelle and consists of four rings (L,P,S, and M) mounted on a central rod.

The protein resides in the periplasm. It localises to the bacterial flagellum basal body. Functionally, assembles around the rod to form the L-ring and probably protects the motor/basal body from shearing forces during rotation. The chain is Flagellar P-ring protein from Xanthomonas oryzae pv. oryzae (strain MAFF 311018).